A 605-amino-acid chain; its full sequence is MKKHTESYWEGVVKSMGLVFGDIGTSPIYTLTVIFALTKPTEANVFGILSMVVWTLIILVTVEYAWLAMSLGRKGEGGTIVLKEILIRLLKPGRQIAFVGFLSFVGVSLLLGDGVITPAISILSAVEGLVLIPGLESMRLGTLILIAALIAVVLFIFQFKGTDKVAAAFGPLMVLWFGALTVSGLVSIATFPKILGAVSPHYAINFFRDNGISAFFVLSEVILCATGGEALYADMGHLGRRPIIRAWYFVFVALIINYLGQGAFALQHGDAKNFLFNMVQGQSQLLYIPFLILTILATVIASQALISGVFSIVYQGITTRIMPLMKVDYTSSHLKSQIYIGSVNWFLMLLVIFIMLIFQKSENLAAAYGLAVTGTMTITGIMMTIIFAHTTKKWKVPVAVAVTIVDVVFLISNLNKLPHGGYWSIILASVPFATILIWTKGQQALYRALKPLDMETFLLSYEQIYAKGKNITGTGLFFTREWNVIPPYVVHCIIRSNIIYERNIFISIVRTDEPFGLKSELKTGFGPGLDAFEIKAGYMEVIDIEKLLKKHDIQEKVIFYGIEDIATMNPVWRVFSVIKKLTPNFVQFNKLPASKLQGVVTRVEM.

12 helical membrane-spanning segments follow: residues 17 to 37 (GLVF…IFAL), 45 to 65 (VFGI…VEYA), 96 to 116 (IAFV…DGVI), 140 to 160 (LGTL…FQFK), 165 to 185 (VAAA…VSGL), 211 to 231 (GISA…GEAL), 246 to 266 (AWYF…AFAL), 286 to 306 (LYIP…QALI), 338 to 358 (IYIG…MLIF), 367 to 387 (AYGL…TIIF), 394 to 414 (WKVP…ISNL), and 417 to 437 (LPHG…TILI).

The protein belongs to the HAK/KUP transporter (TC 2.A.72) family.

It localises to the cell inner membrane. The enzyme catalyses K(+)(in) + H(+)(in) = K(+)(out) + H(+)(out). Transport of potassium into the cell. Likely operates as a K(+):H(+) symporter. This is Probable potassium transport system protein Kup from Geotalea uraniireducens (strain Rf4) (Geobacter uraniireducens).